A 346-amino-acid polypeptide reads, in one-letter code: Uroporphyrinogen decarboxylase (346 aa).

Substrate contacts are provided by residues 26 to 30 (RQAGR), aspartate 76, tyrosine 153, serine 208, and histidine 323.

Belongs to the uroporphyrinogen decarboxylase family. In terms of assembly, homodimer.

The protein resides in the cytoplasm. The catalysed reaction is uroporphyrinogen III + 4 H(+) = coproporphyrinogen III + 4 CO2. The protein operates within porphyrin-containing compound metabolism; protoporphyrin-IX biosynthesis; coproporphyrinogen-III from 5-aminolevulinate: step 4/4. Catalyzes the decarboxylation of four acetate groups of uroporphyrinogen-III to yield coproporphyrinogen-III. This Prochlorococcus marinus (strain MIT 9515) protein is Uroporphyrinogen decarboxylase.